Consider the following 184-residue polypeptide: Probable chemoreceptor glutamine deamidase CheD (184 aa).

The protein belongs to the CheD family.

It catalyses the reaction L-glutaminyl-[protein] + H2O = L-glutamyl-[protein] + NH4(+). In terms of biological role, probably deamidates glutamine residues to glutamate on methyl-accepting chemotaxis receptors (MCPs), playing an important role in chemotaxis. The chain is Probable chemoreceptor glutamine deamidase CheD from Rhizobium rhizogenes (strain K84 / ATCC BAA-868) (Agrobacterium radiobacter).